We begin with the raw amino-acid sequence, 335 residues long: Calcium/calmodulin-dependent protein kinase type I (335 aa).

A Protein kinase domain is found at 31-291 (YRVGRVLGGG…AADALKHPFL (261 aa)). 37-45 (LGGGTYATV) contacts ATP. Residue D154 is the Proton acceptor of the active site. T192 carries the post-translational modification Phosphothreonine; by autocatalysis. Residues 310 to 334 (NARKTFRTAYNAVRAFNTWKKLENK) are calmodulin-binding.

The protein belongs to the protein kinase superfamily. CAMK Ser/Thr protein kinase family. CaMK subfamily.

It localises to the cytoplasm. It carries out the reaction L-seryl-[protein] + ATP = O-phospho-L-seryl-[protein] + ADP + H(+). It catalyses the reaction L-threonyl-[protein] + ATP = O-phospho-L-threonyl-[protein] + ADP + H(+). In terms of biological role, important in cell cycle regulation. The sequence is that of Calcium/calmodulin-dependent protein kinase type I (cmk1) from Schizosaccharomyces pombe (strain 972 / ATCC 24843) (Fission yeast).